The chain runs to 424 residues: UPF0229 protein PFL_5654 (424 aa).

The tract at residues 85–108 is disordered; sequence GEHIARPQGGGGGGGGRGKAGNSG. Positions 92–108 are enriched in gly residues; sequence QGGGGGGGGRGKAGNSG.

Belongs to the UPF0229 family.

The sequence is that of UPF0229 protein PFL_5654 from Pseudomonas fluorescens (strain ATCC BAA-477 / NRRL B-23932 / Pf-5).